Consider the following 403-residue polypeptide: MTAPFVPAAAHVRRFLKSSAGGAFFLLLASLAGFVLANSPWAAGYRTLTTLPLKFPFLGKRGPDNVAAWVSDGLMTLFFLVVILEIKKEIVSGHLSSLRRVALPLIGAVGGMVVPALTYLLVTWGHPEATSGWAIPVATDAAFTLPIILALGRRVSPGARAWLMALAIFDDVLGIVVIALFYGGSMYWPALLAVVLVTAALIGANRGRIRTLWAYGTGGILLWTALLDSGLHPTLAGVITGLCLPAGDAKGAATLDWVSSAVTPLVTWIVLPLFGFMNVGMSAAGMKPDMMLEAVPLGIMLGLMLGKPVGVFGATLLSIRLKVVMLPAGTSTGMLFGLSLLCGIGFTISLFVANLAFSGSDLIAPAKMGIFAGSALSALTGWFWLRFMPQNVTRPSEEGGFPR.

The next 11 helical transmembrane spans lie at 23 to 43, 66 to 86, 101 to 121, 132 to 152, 161 to 181, 184 to 204, 219 to 239, 257 to 277, 297 to 317, 333 to 353, and 363 to 383; these read AFFLLLASLAGFVLANSPWAA, VAAWVSDGLMTLFFLVVILEI, VALPLIGAVGGMVVPALTYLL, GWAIPVATDAAFTLPIILALG, AWLMALAIFDDVLGIVVIALF, GSMYWPALLAVVLVTAALIGA, GILLWTALLDSGLHPTLAGVI, WVSSAVTPLVTWIVLPLFGFM, LGIMLGLMLGKPVGVFGATLL, GMLFGLSLLCGIGFTISLFVA, and IAPAKMGIFAGSALSALTGWF.

Belongs to the NhaA Na(+)/H(+) (TC 2.A.33) antiporter family.

The protein localises to the cell inner membrane. It catalyses the reaction Na(+)(in) + 2 H(+)(out) = Na(+)(out) + 2 H(+)(in). Functionally, na(+)/H(+) antiporter that extrudes sodium in exchange for external protons. This chain is Na(+)/H(+) antiporter NhaA, found in Gluconobacter oxydans (strain 621H) (Gluconobacter suboxydans).